The sequence spans 157 residues: Protein FAM219A (157 aa).

Met1 bears the N-acetylmethionine mark. Residues 1-103 (MMEEIDRFQD…SRYSSSGYSS (103 aa)) form a disordered region. Over residues 17–33 (SDRDCDAREEKQRELAR) the composition is skewed to basic and acidic residues. Residues 38–52 (KNGSMGSPVNQQPKK) show a composition bias toward polar residues. A phosphoserine mark is found at Ser44 and Ser74. Thr85 is modified (phosphothreonine). A phosphoserine mark is found at Ser87 and Ser94. The segment covering 94-103 (SRYSSSGYSS) has biased composition (low complexity).

Belongs to the FAM219 family.

The sequence is that of Protein FAM219A (Fam219a) from Mus musculus (Mouse).